A 367-amino-acid polypeptide reads, in one-letter code: Innexin inx4 (367 aa).

Residues 1 to 21 are Cytoplasmic-facing; that stretch reads MYAAVKPLSKYLQFKSVHIYD. Residues 22 to 42 traverse the membrane as a helical segment; sequence AIFTLHSKVTVALLLACTFLL. Topologically, residues 43–110 are extracellular; that stretch reads SSKQYFGDPI…PENRNYITYY (68 aa). The chain crosses the membrane as a helical span at residues 111–131; it reads QWVVLVLLLESFVFYMPAFLW. The Cytoplasmic portion of the chain corresponds to 132-186; it reads KIWEGGRLKHLCDDFHKMAVCKDKSRTHLRVLVNYFSSDYKETHFRYFVSYVFCE. The helical transmembrane segment at 187–207 threads the bilayer; it reads ILNLSISILNFLLLDVFFGGF. Residues 208-268 lie on the Extracellular side of the membrane; sequence WGRYRNALLS…LLPLNILNEK (61 aa). A helical transmembrane segment spans residues 269 to 289; the sequence is IFAFLWIWFILVAMLISLKFL. Residues 290-367 are Cytoplasmic-facing; it reads YRLATVLYPG…IKIPPGADKI (78 aa).

The protein belongs to the pannexin family. As to expression, expressed in nurse cells and oocyte during oogenesis. Uniform expression in imaginal wing disk and low expression in developing imaginal CNS. Expressed in embryonic pole cells and primordial germ cells.

It is found in the cell membrane. The protein localises to the cell junction. It localises to the gap junction. Structural component of the gap junctions in germline cells. Required for differentiation and survival of germline cysts in females and of spermatogonia in males; gap junctional communication between spermatogonia and somatic cyst cells may be required for normal differentiation and survival of spermatogonia. The sequence is that of Innexin inx4 (zpg) from Drosophila melanogaster (Fruit fly).